The chain runs to 422 residues: ATP phosphoribosyltransferase regulatory subunit (422 aa).

It belongs to the class-II aminoacyl-tRNA synthetase family. HisZ subfamily. Heteromultimer composed of HisG and HisZ subunits.

Its subcellular location is the cytoplasm. It participates in amino-acid biosynthesis; L-histidine biosynthesis; L-histidine from 5-phospho-alpha-D-ribose 1-diphosphate: step 1/9. Functionally, required for the first step of histidine biosynthesis. May allow the feedback regulation of ATP phosphoribosyltransferase activity by histidine. This Clostridium botulinum (strain 657 / Type Ba4) protein is ATP phosphoribosyltransferase regulatory subunit.